The sequence spans 159 residues: 2-C-methyl-D-erythritol 2,4-cyclodiphosphate synthase (159 aa).

Positions 8 and 10 each coordinate a divalent metal cation. Residues 8-10 (DVH) and 34-35 (HS) each bind 4-CDP-2-C-methyl-D-erythritol 2-phosphate. His42 contributes to the a divalent metal cation binding site. 4-CDP-2-C-methyl-D-erythritol 2-phosphate is bound by residues 56–58 (DIG), 61–65 (FPDTD), 100–106 (AQAPKML), 132–135 (TTTE), Phe139, and Arg142.

Belongs to the IspF family. Homotrimer. It depends on a divalent metal cation as a cofactor.

The enzyme catalyses 4-CDP-2-C-methyl-D-erythritol 2-phosphate = 2-C-methyl-D-erythritol 2,4-cyclic diphosphate + CMP. Its pathway is isoprenoid biosynthesis; isopentenyl diphosphate biosynthesis via DXP pathway; isopentenyl diphosphate from 1-deoxy-D-xylulose 5-phosphate: step 4/6. Involved in the biosynthesis of isopentenyl diphosphate (IPP) and dimethylallyl diphosphate (DMAPP), two major building blocks of isoprenoid compounds. Catalyzes the conversion of 4-diphosphocytidyl-2-C-methyl-D-erythritol 2-phosphate (CDP-ME2P) to 2-C-methyl-D-erythritol 2,4-cyclodiphosphate (ME-CPP) with a corresponding release of cytidine 5-monophosphate (CMP). The sequence is that of 2-C-methyl-D-erythritol 2,4-cyclodiphosphate synthase from Salmonella typhimurium (strain LT2 / SGSC1412 / ATCC 700720).